A 548-amino-acid chain; its full sequence is MSGDTGTPNQGGTRYGSISSPPSPGPQQAPPGGTYLSEKIPIPDTESGAFSLRKLWAFTGPGFLMSIAFLDPGNIESDLQAGAVAGFKLLWVLLWATVLGLLCQRLAARLGVVTGKDLGEVCHLYYPKVPRTLLWLTIELAIVGSDMQEVIGTAIAFSLLSAGRIPLWGGVLITIVDTFFFLFLDNYGLRKLEAFFGFLITIMALTFGYEYVVARPAQGALLQGLFLPSCPGCGQPELLQAVGIVGAIIMPHNIYLHSSLVKSREVDRSRRADIREANMYFLIEATIALSVSFFINLFVMAVFGQAFYKQTNQAAFNICANSSLHDYATIFPRDNLTVAVDIYQGGVILGCLFGPAALYIWAVGLLAAGQSSTMTGTYAGQFVMEGFLKLRWSRFARVLLTRSCAIPPTVLLAVFRDLQDLSGLNDLLNVLQSLLLPFAVLPILTFTSMPALMQEFANGLVSKIITSSIMVLVCAVNLYFVISYVPSLPHPAYFSLVALLAAAYLGLTTYLVWTCLITQGATRLAHSSHQRFLYGLPGEDQEEGRTSG.

The segment covering 1-12 (MSGDTGTPNQGG) has biased composition (polar residues). Residues 1–38 (MSGDTGTPNQGGTRYGSISSPPSPGPQQAPPGGTYLSE) form a disordered region. The Cytoplasmic portion of the chain corresponds to 1–55 (MSGDTGTPNQGGTRYGSISSPPSPGPQQAPPGGTYLSEKIPIPDTESGAFSLRKL). Residues 56–73 (WAFTGPGFLMSIAFLDPG) form a helical membrane-spanning segment. Residues 74-82 (NIESDLQAG) lie on the Extracellular side of the membrane. The chain crosses the membrane as a helical span at residues 83–102 (AVAGFKLLWVLLWATVLGLL). The Cytoplasmic segment spans residues 103–139 (CQRLAARLGVVTGKDLGEVCHLYYPKVPRTLLWLTIE). The chain crosses the membrane as a helical span at residues 140–160 (LAIVGSDMQEVIGTAIAFSLL). At 161 to 164 (SAGR) the chain is on the extracellular side. The chain crosses the membrane as a helical span at residues 165-184 (IPLWGGVLITIVDTFFFLFL). Topologically, residues 185 to 193 (DNYGLRKLE) are cytoplasmic. Residues 194-214 (AFFGFLITIMALTFGYEYVVA) traverse the membrane as a helical segment. Residues 215 to 237 (RPAQGALLQGLFLPSCPGCGQPE) are Extracellular-facing. Residues 238 to 256 (LLQAVGIVGAIIMPHNIYL) traverse the membrane as a helical segment. The Cytoplasmic portion of the chain corresponds to 257-284 (HSSLVKSREVDRSRRADIREANMYFLIE). A helical membrane pass occupies residues 285–304 (ATIALSVSFFINLFVMAVFG). Topologically, residues 305–346 (QAFYKQTNQAAFNICANSSLHDYATIFPRDNLTVAVDIYQGG) are extracellular. N-linked (GlcNAc...) asparagine glycosylation is found at Asn-321 and Asn-335. The chain crosses the membrane as a helical span at residues 347 to 366 (VILGCLFGPAALYIWAVGLL). Residues 367 to 397 (AAGQSSTMTGTYAGQFVMEGFLKLRWSRFAR) are Cytoplasmic-facing. Residues 398–415 (VLLTRSCAIPPTVLLAVF) form a helical membrane-spanning segment. Residues 416 to 426 (RDLQDLSGLND) are Extracellular-facing. The helical transmembrane segment at 427 to 447 (LLNVLQSLLLPFAVLPILTFT) threads the bilayer. Over 448–463 (SMPALMQEFANGLVSK) the chain is Cytoplasmic. The helical transmembrane segment at 464-485 (IITSSIMVLVCAVNLYFVISYV) threads the bilayer. Residues 486–493 (PSLPHPAY) are Extracellular-facing. The helical transmembrane segment at 494-513 (FSLVALLAAAYLGLTTYLVW) threads the bilayer. The Cytoplasmic portion of the chain corresponds to 514–548 (TCLITQGATRLAHSSHQRFLYGLPGEDQEEGRTSG).

This sequence belongs to the NRAMP family.

Its subcellular location is the late endosome membrane. It localises to the lysosome membrane. The enzyme catalyses Zn(2+)(in) + H(+)(out) = Zn(2+)(out) + H(+)(in). It catalyses the reaction Fe(2+)(in) + H(+)(out) = Fe(2+)(out) + H(+)(in). The catalysed reaction is Mn(2+)(in) + H(+)(out) = Mn(2+)(out) + H(+)(in). Its function is as follows. Macrophage-specific antiporter that fluxes metal ions in either direction against a proton gradient. Localized to late endosomal lysosomal membranes, delivers bivalent cations from the cytosol into these acidic compartments where they may directly affect antimicrobial activity. Involved in iron metabolism and host natural resistance to infection with intracellular parasites. Pathogen resistance involves sequestration of Fe(2+) and Mn(2+), cofactors of both prokaryotic and eukaryotic catalases and superoxide dismutases, not only to protect the macrophage against its own generation of reactive oxygen species, but to deny the cations to the pathogen for synthesis of its protective enzymes. This is Natural resistance-associated macrophage protein 1 (SLC11A1) from Ovis aries (Sheep).